A 238-amino-acid chain; its full sequence is 1-(5-phosphoribosyl)-5-[(5-phosphoribosylamino)methylideneamino] imidazole-4-carboxamide isomerase (238 aa).

The active-site Proton acceptor is aspartate 8. The active-site Proton donor is aspartate 129.

Belongs to the HisA/HisF family.

It localises to the cytoplasm. The catalysed reaction is 1-(5-phospho-beta-D-ribosyl)-5-[(5-phospho-beta-D-ribosylamino)methylideneamino]imidazole-4-carboxamide = 5-[(5-phospho-1-deoxy-D-ribulos-1-ylimino)methylamino]-1-(5-phospho-beta-D-ribosyl)imidazole-4-carboxamide. Its pathway is amino-acid biosynthesis; L-histidine biosynthesis; L-histidine from 5-phospho-alpha-D-ribose 1-diphosphate: step 4/9. This is 1-(5-phosphoribosyl)-5-[(5-phosphoribosylamino)methylideneamino] imidazole-4-carboxamide isomerase from Lacticaseibacillus casei (strain BL23) (Lactobacillus casei).